Consider the following 895-residue polypeptide: MEVQLGLGRVYPRPPSKTYRGAFQNLFQSVREVIQNPGPRHPEAASAAPPGASLQQQQQQQQQETSPRQQQQQQGEDGSPQAHRRGPTGYLVLDEEQQPSQPQSAPECHPERGCVPEPGAAVAAGKGLPQQLPAPPDEDDSAAPSTLSLLGPTFPGLSSCSADLKDILSEASTMQLLQQQQQEAVSEGSSSGRAREASGAPTSSKDNYLGGTSTISDSAKELCKAVSVSMGLGVEALEHLSPGEQLRGDCMYAPVLGVPPAVRPTPCAPLAECKGSLLDDSAGKSTEDTAEYSPFKGGYTKGLEGESLGCSGSAAAGSSGTLELPSTLSLYKSGALDEAAAYQSRDYYNFPLALAGPPPPPPPPHPHARIKLENPLDYGSAWAAAAAQCRYGELASLHGAGAAGPGSGSPSAAASSSWHTLFTAEEGQLYGPCGGGGGGGGGGGGGAGEAGAVAPYGYTRPPQGLAGQEGDFTAPDVWYPGGMVSRVPYPSPTCVKSEMGPWMDSYSGPYGDMRLETARDHVLPIDYYFPPQKTCLICGDEASGCHYGALTCGSCKVFFKRAAEGKQKYLCASRNDCTIDKFRRKNCPSCRLRKCYEAGMTLGARKLKKLGNLKLQEEGEASSTTSPTEETAQKLTVSHIEGYECQPIFLNVLEAIEPGVVCAGHDNNQPDSFAALLSSLNELGERQLVHVVKWAKALPGFRNLHVDDQMAVIQYSWMGLMVFAMGWRSFTNVNSRMLYFAPDLVFNEYRMHKSRMYSQCVRMRHLSQEFGWLQITPQEFLCMKALLLFSIIPVDGLKNQKFFDELRMNYIKELDRIIACKRKNPTSCSRRFYQLTKLLDSVQPIARELHQFTFDLLIKSHMVSVDFPEMMAEIISVQVPKILSGKVKPIYFHTQ.

Residues 1 to 533 (MEVQLGLGRV…PIDYYFPPQK (533 aa)) are modulating. Residues 1-562 (MEVQLGLGRV…GSCKVFFKRA (562 aa)) are interaction with ZNF318. Disordered stretches follow at residues 33–155 (VIQN…PTFP) and 175–211 (QLLQ…YLGG). 2 stretches are compositionally biased toward low complexity: residues 44–81 (AASA…GSPQ) and 175–200 (QLLQ…ASGA). Phosphoserine; by CDK9 is present on Ser66. The residue at position 79 (Ser79) is a Phosphoserine. Over residues 201–211 (PTSSKDNYLGG) the composition is skewed to polar residues. Tyr208 is subject to Phosphotyrosine; by CSK. The residue at position 241 (Ser241) is a Phosphoserine. Position 252 is a phosphotyrosine; by CSK and TNK2 (Tyr252). Residues Tyr292, Tyr331, Tyr342, and Tyr347 each carry the phosphotyrosine; by CSK modification. Tyr348 is subject to Phosphotyrosine; by CSK and TNK2. Lys371 is covalently cross-linked (Glycyl lysine isopeptide (Lys-Gly) (interchain with G-Cter in SUMO)). Tyr378 is modified (phosphotyrosine; by CSK). Residue Lys496 forms a Glycyl lysine isopeptide (Lys-Gly) (interchain with G-Cter in SUMO) linkage. Tyr510 and Tyr527 each carry phosphotyrosine; by CSK. An interaction with LPXN region spans residues 527–894 (YYFPPQKTCL…GKVKPIYFHT (368 aa)). The nuclear receptor DNA-binding region spans 534 to 607 (TCLICGDEAS…AGMTLGARKL (74 aa)). NR C4-type zinc fingers lie at residues 535 to 555 (CLIC…CGSC) and 571 to 595 (CASR…LRKC). An interaction with HIPK3 region spans residues 547–637 (YGALTCGSCK…TEETAQKLTV (91 aa)). The tract at residues 567–894 (QKYLCASRND…GKVKPIYFHT (328 aa)) is interaction with CCAR1. The tract at residues 600-894 (MTLGARKLKK…GKVKPIYFHT (295 aa)) is interaction with KAT7. Ser626 carries the post-translational modification Phosphoserine; by STK4/MST1. Residues 644–875 (ECQPIFLNVL…DFPEMMAEII (232 aa)) enclose the NR LBD domain. 17beta-hydroxy-5alpha-androstan-3-one is bound by residues Asn681 and Arg728. Residues Lys821 and Lys823 each participate in a glycyl lysine isopeptide (Lys-Gly) (interchain with G-Cter in ubiquitin) cross-link. Thr853 is a 17beta-hydroxy-5alpha-androstan-3-one binding site. Position 891 is a phosphotyrosine; by CSK (Tyr891).

This sequence belongs to the nuclear hormone receptor family. NR3 subfamily. Binds DNA as a homodimer. Part of a ternary complex containing AR, EFCAB6/DJBP and PARK7. Interacts with HIPK3 and NR0B2 in the presence of androgen. The ligand binding domain interacts with KAT7/HBO1 in the presence of dihydrotestosterone. Interacts with EFCAB6/DJBP, PQBP1, RANBP9, RBAK, SPDEF, SRA1, TGFB1I1 and RREB1. Interacts with ZMIZ1/ZIMP10 and ZMIZ2/ZMIP7 which both enhance its transactivation activity. Interacts with SLC30A9 and RAD54L2/ARIP4. Interacts with MACROD1 (via macro domain). Interacts via the ligand-binding domain with LXXLL and FXXLF motifs from NCOA1, NCOA2, NCOA3 and MAGEA11. Interacts (via nuclear receptor DNA binding domain and nuclear receptor ligand binding domain) with NCOA4. The AR N-terminal poly-Gln region binds Ran resulting in enhancement of AR-mediated transactivation. Ran-binding decreases as the poly-Gln length increases. Interacts with HIP1 (via coiled coil domain). Interacts (via ligand-binding domain) with TRIM68. Interacts with TNK2. Interacts with USP26. Interacts with RNF6. Interacts (regulated by RNF6 probably through polyubiquitination) with RNF14; regulates AR transcriptional activity. Interacts with PRMT2 and TRIM24. Interacts with RACK1. Interacts with RANBP10; this interaction enhances dihydrotestosterone-induced AR transcriptional activity. Interacts with PRPF6 in a hormone-independent way; this interaction enhances dihydrotestosterone-induced AR transcriptional activity. Interacts with STK4/MST1. Interacts with ZIPK/DAPK3. Interacts with LPXN. Interacts with MAK. Part of a complex containing AR, MAK and NCOA3. Interacts with CRY1. Interacts with CCAR1 and GATA2. Interacts with ZNF318. Interacts with BUD31. Interacts with ARID4A. Interacts with ARID4B. Interacts (via NR LBD domain) with ZBTB7A; the interaction is direct and androgen-dependent. Interacts with NCOR1. Interacts with NCOR2. Interacts with CRY2 in a ligand-dependent manner. Phosphorylated in prostate cancer cells in response to several growth factors including EGF. Phosphorylation is induced by c-Src kinase (CSK). Tyr-510 is one of the major phosphorylation sites and an increase in phosphorylation and Src kinase activity is associated with prostate cancer progression. Phosphorylation by TNK2 enhances the DNA-binding and transcriptional activity. Phosphorylation at Ser-66 by CDK9 regulates AR promoter selectivity and cell growth. Post-translationally, sumoylated on Lys-371 (major) and Lys-496. Ubiquitinated. Deubiquitinated by USP26. 'Lys-6' and 'Lys-27'-linked polyubiquitination by RNF6 modulates AR transcriptional activity and specificity. In terms of processing, palmitoylated by ZDHHC7 and ZDHHC21. Palmitoylation is required for plasma membrane targeting and for rapid intracellular signaling via ERK and AKT kinases and cAMP generation.

The protein localises to the nucleus. Its subcellular location is the cytoplasm. In terms of biological role, steroid hormone receptors are ligand-activated transcription factors that regulate eukaryotic gene expression and affect cellular proliferation and differentiation in target tissues. Transcription factor activity is modulated by bound coactivator and corepressor proteins like ZBTB7A that recruits NCOR1 and NCOR2 to the androgen response elements/ARE on target genes, negatively regulating androgen receptor signaling and androgen-induced cell proliferation. Transcription activation is also down-regulated by NR0B2. Activated, but not phosphorylated, by HIPK3 and ZIPK/DAPK3. In Papio hamadryas (Hamadryas baboon), this protein is Androgen receptor (AR).